A 724-amino-acid chain; its full sequence is MTLDERDLELIREELGRDPNATERAMFENMWSEHCAYRSTRHLLRQLPSEADHVIVGPGDDAAVVAIDDEWAVVVGIESHNHPSYVDPYNGAATGVGGIVRDVLSMGAFPIALLDPLRFGPLDGERVPYLVDGVVRGISDYGNRIGVPTVGGELEFDPSYERNPLVNVMCVGIVRRSEIVRGRADRPGDVLVLVGARTGRDGIGGAAFASEELGEESEEEDRPAVQIGDPFTERQLIIAIREAVERGLVKGCKDLGAAGLTCAATEMAADGGTGVEIDVFKVPLREEGMEPWEIMLSESQERMLLVVAPEDVDEVIEICRKYGLEASVVGRVTDDGYLTVKDGDDVIARVPAEFLADGAPEVEWEEEPYSYPENVDVPEPDPEDLVRSVLSSPNVSPALREWVYRQYDHEVQGRTVVKPGHDAAVMWLQHEGLEDVALALTTDSNPRHVLIDPKTGTEGCVAEALRNLATVGAEPLCLVDCLNFGSPENPRVYYQLRRSIEGLGKAAREFEVPVVGGNVSLYNEHEVDGPVNPTPVIGAVGVIRGLDYLEDFPREPEEGEAVIVLGETREELGGSLYLIEYHGIKGGKVPRVRYREERALHDLLRRIARKNMVSSVTDVSTGGLLAAVAELLGPVGASLSLSEVPNSVSRWDFLLLSESHGRAIVTTDRPDDVLGAAEEAGVPAQVVGEVTGDGVLRISVGPVDVSLDREELEELWRSPLHYLE.

Residue His34 is part of the active site. Position 37 (Tyr37) interacts with ATP. Glu78 lines the Mg(2+) pocket. Residues Ser79–His82 and Arg101 contribute to the substrate site. The active-site Proton acceptor is the His80. Residue Asp102 coordinates Mg(2+). Substrate is bound at residue Gln226. Asp254 contributes to the Mg(2+) binding site. Glu298–Gln300 contacts substrate. ATP contacts are provided by Asp480 and Gly517. Residue Asn518 coordinates Mg(2+). Residue Ser520 coordinates substrate.

Belongs to the FGAMS family. In terms of assembly, monomer. Part of the FGAM synthase complex composed of 1 PurL, 1 PurQ and 2 PurS subunits.

The protein resides in the cytoplasm. The catalysed reaction is N(2)-formyl-N(1)-(5-phospho-beta-D-ribosyl)glycinamide + L-glutamine + ATP + H2O = 2-formamido-N(1)-(5-O-phospho-beta-D-ribosyl)acetamidine + L-glutamate + ADP + phosphate + H(+). Its pathway is purine metabolism; IMP biosynthesis via de novo pathway; 5-amino-1-(5-phospho-D-ribosyl)imidazole from N(2)-formyl-N(1)-(5-phospho-D-ribosyl)glycinamide: step 1/2. Part of the phosphoribosylformylglycinamidine synthase complex involved in the purines biosynthetic pathway. Catalyzes the ATP-dependent conversion of formylglycinamide ribonucleotide (FGAR) and glutamine to yield formylglycinamidine ribonucleotide (FGAM) and glutamate. The FGAM synthase complex is composed of three subunits. PurQ produces an ammonia molecule by converting glutamine to glutamate. PurL transfers the ammonia molecule to FGAR to form FGAM in an ATP-dependent manner. PurS interacts with PurQ and PurL and is thought to assist in the transfer of the ammonia molecule from PurQ to PurL. This is Phosphoribosylformylglycinamidine synthase subunit PurL from Methanopyrus kandleri (strain AV19 / DSM 6324 / JCM 9639 / NBRC 100938).